We begin with the raw amino-acid sequence, 88 residues long: Small ribosomal subunit protein bS20 (88 aa).

Residues 1-21 (MANSKSAKKRALQSEKRRQHN) show a composition bias toward basic residues. Positions 1 to 27 (MANSKSAKKRALQSEKRRQHNASRSSM) are disordered.

The protein belongs to the bacterial ribosomal protein bS20 family.

In terms of biological role, binds directly to 16S ribosomal RNA. The chain is Small ribosomal subunit protein bS20 from Shewanella piezotolerans (strain WP3 / JCM 13877).